A 160-amino-acid chain; its full sequence is Phosphopantetheine adenylyltransferase (160 aa).

Residue Thr-10 participates in substrate binding. Residues 10–11 (TF) and His-18 contribute to the ATP site. Residues Lys-42, Met-74, and Arg-88 each coordinate substrate. ATP is bound by residues 89 to 91 (GVR), Glu-99, and 124 to 130 (WSYISST).

It belongs to the bacterial CoaD family. In terms of assembly, homohexamer. Requires Mg(2+) as cofactor.

It is found in the cytoplasm. The catalysed reaction is (R)-4'-phosphopantetheine + ATP + H(+) = 3'-dephospho-CoA + diphosphate. Its pathway is cofactor biosynthesis; coenzyme A biosynthesis; CoA from (R)-pantothenate: step 4/5. Reversibly transfers an adenylyl group from ATP to 4'-phosphopantetheine, yielding dephospho-CoA (dPCoA) and pyrophosphate. This is Phosphopantetheine adenylyltransferase from Sodalis glossinidius (strain morsitans).